The following is a 423-amino-acid chain: MLWRNEITEFMDQLSKYSQEILKTFKQLRPSEYKQYNEFLTQVTPLLQKTPEKIPELVDHIFNYLDNVEKICELLVNASSIIISSKIREQVKHGMSFSYKADLDSLADILSQKQYVLMHLSKNIAAQYFNTCLNQGKSKLDLKAASVFYSSRPRTASSAELYRKMLYAYGSPQEINYYTEKARNKTLDVEENDSMAIIERTARHNLSLMHPLEAMGLTFGATNTDADPEDLKDKTVINLTLPQATESITYHLKSLMQLKKVSTASGLNTNILKAFDNIISTPVKKNKMASKLAPGMDVVFTSDNGKTFFTKNILSKNMLAGPKERVFAYNNLISNLNNSCFIQNHNDFLRQQDSWPFYDAHNFTNKFLMQPIFSGQTRPRLQGAMEAAHVETHLTAFLQSIQPSRPQDPSVLASPKLSALILN.

Belongs to the asfivirus E423R family.

The protein localises to the virion. This is an uncharacterized protein from African swine fever virus (isolate Tick/South Africa/Pretoriuskop Pr4/1996) (ASFV).